Here is a 389-residue protein sequence, read N- to C-terminus: UDP-N-acetylglucosamine--N-acetylmuramyl-(pentapeptide) pyrophosphoryl-undecaprenol N-acetylglucosamine transferase (389 aa).

Residues 17–19 (TAG), Asn-137, Arg-179, Ser-213, and Gln-308 contribute to the UDP-N-acetyl-alpha-D-glucosamine site.

This sequence belongs to the glycosyltransferase 28 family. MurG subfamily.

The protein resides in the cell membrane. It catalyses the reaction di-trans,octa-cis-undecaprenyl diphospho-N-acetyl-alpha-D-muramoyl-L-alanyl-D-glutamyl-meso-2,6-diaminopimeloyl-D-alanyl-D-alanine + UDP-N-acetyl-alpha-D-glucosamine = di-trans,octa-cis-undecaprenyl diphospho-[N-acetyl-alpha-D-glucosaminyl-(1-&gt;4)]-N-acetyl-alpha-D-muramoyl-L-alanyl-D-glutamyl-meso-2,6-diaminopimeloyl-D-alanyl-D-alanine + UDP + H(+). Its pathway is cell wall biogenesis; peptidoglycan biosynthesis. In terms of biological role, cell wall formation. Catalyzes the transfer of a GlcNAc subunit on undecaprenyl-pyrophosphoryl-MurNAc-pentapeptide (lipid intermediate I) to form undecaprenyl-pyrophosphoryl-MurNAc-(pentapeptide)GlcNAc (lipid intermediate II). The chain is UDP-N-acetylglucosamine--N-acetylmuramyl-(pentapeptide) pyrophosphoryl-undecaprenol N-acetylglucosamine transferase from Rhodococcus erythropolis (strain PR4 / NBRC 100887).